We begin with the raw amino-acid sequence, 187 residues long: Protein GrpE (187 aa).

A disordered region spans residues 1–31 (MEKKETKNDAEKNNKQDNKSTKSQKKENLNL).

This sequence belongs to the GrpE family. Homodimer.

It localises to the cytoplasm. In terms of biological role, participates actively in the response to hyperosmotic and heat shock by preventing the aggregation of stress-denatured proteins, in association with DnaK and GrpE. It is the nucleotide exchange factor for DnaK and may function as a thermosensor. Unfolded proteins bind initially to DnaJ; upon interaction with the DnaJ-bound protein, DnaK hydrolyzes its bound ATP, resulting in the formation of a stable complex. GrpE releases ADP from DnaK; ATP binding to DnaK triggers the release of the substrate protein, thus completing the reaction cycle. Several rounds of ATP-dependent interactions between DnaJ, DnaK and GrpE are required for fully efficient folding. The chain is Protein GrpE from Borrelia garinii subsp. bavariensis (strain ATCC BAA-2496 / DSM 23469 / PBi) (Borreliella bavariensis).